A 926-amino-acid chain; its full sequence is MLAEKMGAITLHCMPVASTPTRRGRPPGSSAARASNGAGSEAATAIPAGATPAMAQWFVLKNQHPDALLFFRMGDFYELFFQDAENAAATLDIQLTKRGLHEGEPIPMCGVPVHAAEMYLSRLIRRGWRVAIVEQMENPKNRAGKGPIRRDVVRLVTPGTITEETLLDAGRPNLLLAITQSGNRLGAAWLDISTGLFETESLDESGLTALLGRLDPAEILCPSSLHLEMWDARRGPEQPVSDPANARARLAEAYDVSHINVFGSFTDAEAMAAMQALDYVRDAQMGALPRLGHPVPVGEAGRLAMDASTRASLEIDRARDGGTERTLLSAVQRTLTPAGGRMLAAWLGAPLTDRTVITARQDGWGWLLEQPTLSMRLRETLRGCPDMARALGRIALGRGTPRDLAAIRDGAHIAMEAAGLLEGILPSALAELHAALHLPPDLPEMLEAALADPVPARIEDGGVIASGFDGELDAERGLRDDSRKVIAALQTEYAQRYGVASLKIRHHAQLGYMIEVPAVAVETLRTVPELILRQGMANGARFTHPDLSELDRRITEAAERARQREMIVITALRQKVEAHAGSIAACAEALARLDVLQSAARLAESGTWCRPVMTDDQTLTIEAGRHPVVEAALEGGPTPFMPNDTDLSASRRVMLLTGPNMAGKSTYLRQNALIVILAQAGLPVPARAAHIGIVDRLFSRVGASDDLARGQSTFMVEMTETAAILHQAGPRSLVVVDEIGRGTSTLDGLAIAWAVLEALHSRIGARTIFATHFHELARLQGELPMLRPYTMKVQEWRGKVVFLHEVAEGAGGRSWGVHVAKLAGVPAATVRRAGQLLTALEERSVGLTDNATLPLFAASHGNETETEPAEGIHEAKPASLPPELIEALGQMEPDKLTPREALDLMYHFKSMLSSQAHNGDVEAESW.

Residues 16–40 form a disordered region; sequence VASTPTRRGRPPGSSAARASNGAGS. Residues 26–40 are compositionally biased toward low complexity; sequence PPGSSAARASNGAGS. Residue 658-665 participates in ATP binding; sequence GPNMAGKS.

Belongs to the DNA mismatch repair MutS family.

In terms of biological role, this protein is involved in the repair of mismatches in DNA. It is possible that it carries out the mismatch recognition step. This protein has a weak ATPase activity. This chain is DNA mismatch repair protein MutS, found in Granulibacter bethesdensis (strain ATCC BAA-1260 / CGDNIH1).